A 152-amino-acid polypeptide reads, in one-letter code: MSHVTLIGDRLASTGTEFVYEGESVACEGCPYRKQCLNLTEGVRYEITDVRDDGQLLDCAVHDTGVRAVEVEPTSVVANVATREAYAGGKAELPGSCPHTECPSHEYCVPDGAEFDTEYQIETVHGDPPHEHCQLDRELTLVEFKPPDTTSN.

Belongs to the UPF0179 family.

This is UPF0179 protein HQ_3004A from Haloquadratum walsbyi (strain DSM 16790 / HBSQ001).